We begin with the raw amino-acid sequence, 287 residues long: Uricase (287 aa).

Residues Lys11 and Thr58 each act as charge relay system in the active site. Urate is bound by residues Thr58, Asp59, Phe160, Arg177, Val219, Gln220, and Asn246. The Charge relay system role is filled by His248. The short motif at 285–287 is the Microbody targeting signal element; it reads SRL.

The protein belongs to the uricase family.

Its subcellular location is the peroxisome. The enzyme catalyses urate + O2 + H2O = 5-hydroxyisourate + H2O2. It functions in the pathway purine metabolism; urate degradation; (S)-allantoin from urate: step 1/3. Functionally, catalyzes the oxidation of uric acid to 5-hydroxyisourate, which is further processed to form (S)-allantoin. The chain is Uricase (uox) from Dictyostelium discoideum (Social amoeba).